A 419-amino-acid polypeptide reads, in one-letter code: uncharacterized protein (419 aa).

It belongs to the MT-A70-like family.

Its subcellular location is the cytoplasm. This is an uncharacterized protein from Schizosaccharomyces pombe (strain 972 / ATCC 24843) (Fission yeast).